The chain runs to 80 residues: FXYD domain-containing ion transport regulator 7 (80 aa).

Residues 1–23 lie on the Extracellular side of the membrane; the sequence is MATPTQTPTKAPEEPDPFYYDYN. O-linked (GlcNAc) threonine glycans are attached at residues T3, T5, and T9. Residues 24 to 46 form a helical membrane-spanning segment; sequence TVQTVGMTLATILFLLGILIVIS. At 47–80 the chain is on the cytoplasmic side; it reads KKVKCRKADSRSESPTCKSCKSELPSSAPGGGGV. The disordered stretch occupies residues 54-80; the sequence is ADSRSESPTCKSCKSELPSSAPGGGGV. S73 carries the post-translational modification Phosphoserine.

This sequence belongs to the FXYD family. As to quaternary structure, regulatory subunit of the sodium/potassium-transporting ATPase which is composed of a catalytic alpha subunit, a non-catalytic beta subunit and a FXYD regulatory unit that modulates the enzymatic activity in a tissue- and isoform-specific way by changing affinities of the Na+/K+-ATPase toward Na(+), K(+) or ATP. Post-translationally, O-glycosylated; required for stabilization and translocation to the plasma membrane.

Its subcellular location is the cell membrane. Functionally, associates with and regulates the activity of the sodium/potassium-transporting ATPase (NKA) which catalyzes the hydrolysis of ATP coupled with the exchange of Na(+) and K(+) ions across the plasma membrane. Reduces the apparent affinity for external K(+), an effect that depends on the presence of external Na(+) and voltage. Increases the apparent affinity for intracellular Na(+). In Homo sapiens (Human), this protein is FXYD domain-containing ion transport regulator 7 (FXYD7).